The chain runs to 323 residues: V-type ATP synthase subunit C (323 aa).

The protein belongs to the V-ATPase V0D/AC39 subunit family.

Produces ATP from ADP in the presence of a proton gradient across the membrane. In Thermus thermophilus (strain ATCC 27634 / DSM 579 / HB8), this protein is V-type ATP synthase subunit C (atpC).